Consider the following 509-residue polypeptide: Maturase K (509 aa).

The protein belongs to the intron maturase 2 family. MatK subfamily.

The protein localises to the plastid. It localises to the chloroplast. Its function is as follows. Usually encoded in the trnK tRNA gene intron. Probably assists in splicing its own and other chloroplast group II introns. The polypeptide is Maturase K (Nicotiana plumbaginifolia (Leadwort-leaved tobacco)).